The following is an 802-amino-acid chain: MLVSYNWVKEFFQDFPLTAEELGEAITRTGIEIEGVEELSASLKNVVVGEVLSCERHPDAEKLNKCLVQTDETEPVQIICGAPNVAAGQKVIVAKVGARLPGGLKIKRAKLRGEVSEGMICSLAELGFESKVVPKAYAEGIYVLPAHVETGVSAITLLGLDDAILDMAITPNRADALSMNGVAHEVGAIIHQKPAQPTEPDVSEKGKADDFISVEVENPAETPYYAIKMVENIEIKESPLWLQTKLMKAGIRPHNNVVDVTNYINLLYGQPLHSFDYDKIGSKKIVVRSAKEQEEITTLDGEKRTLQAGHTVITNGVEPIAIAGVMGGEFSEVTENTTTVALEGAIFSSSSIGKASRELYLRTEASIRYDKGSDAWKVEKALAHGGALIAELSGGTLVGGVVEVDNREKAVNKIETSLTRINRILGTAITLAEIETIFDRLGFVLEVKNDALIIEVPTRRWDITIEADILEEVARIYGYDEIPVTLPATSTTGGLSDSQKARRVMRAYLEGAGLNQALTYSLTSKKDATRLALSDEKTVALSMPMSEEHSHLRTSIVPQLIRSASYNIARKNMDVALYEMGTVFYATEGDNLPIEQEHLAGLITGNWHTIDWQKTPKPVDFFVLKGIVEGLVNKLGIKSELHWKQTEKEELHPGRTASLILEGQEIGYLGALHPAVEANYDLKETYVFEINVAALLDATKEKVVYHPIPRYPEMTRDLALLVDKNTDHATISQVIQEHGGKLLVDIELFDIFEGESIGENKKSLAYTLTFLDSERTLVEEDVQKATNKVIEALQEKLHAIIR.

Residues 40 to 155 enclose the tRNA-binding domain; the sequence is SASLKNVVVG…AHVETGVSAI (116 aa). Residues 409–484 form the B5 domain; sequence KAVNKIETSL…RIYGYDEIPV (76 aa). Residues aspartate 462, aspartate 468, glutamate 471, and glutamate 472 each contribute to the Mg(2+) site. An FDX-ACB domain is found at 709–802; that stretch reads PRYPEMTRDL…LQEKLHAIIR (94 aa).

Belongs to the phenylalanyl-tRNA synthetase beta subunit family. Type 1 subfamily. Tetramer of two alpha and two beta subunits. Mg(2+) is required as a cofactor.

The protein localises to the cytoplasm. The enzyme catalyses tRNA(Phe) + L-phenylalanine + ATP = L-phenylalanyl-tRNA(Phe) + AMP + diphosphate + H(+). The polypeptide is Phenylalanine--tRNA ligase beta subunit (Listeria monocytogenes serotype 4b (strain F2365)).